Consider the following 438-residue polypeptide: tRNA modification GTPase MnmE (438 aa).

Arg-20, Glu-78, and Lys-117 together coordinate (6S)-5-formyl-5,6,7,8-tetrahydrofolate. The TrmE-type G domain occupies 214 to 359 (GIRVLIIGKP…LIDEIKKLFY (146 aa)). Residue Asn-224 coordinates K(+). Residues 224-229 (NVGKST), 243-249 (TDIPGTT), and 268-271 (DTAG) contribute to the GTP site. Ser-228 is a binding site for Mg(2+). Positions 243, 245, and 248 each coordinate K(+). Thr-249 serves as a coordination point for Mg(2+). Position 438 (Lys-438) interacts with (6S)-5-formyl-5,6,7,8-tetrahydrofolate.

The protein belongs to the TRAFAC class TrmE-Era-EngA-EngB-Septin-like GTPase superfamily. TrmE GTPase family. Homodimer. Heterotetramer of two MnmE and two MnmG subunits. It depends on K(+) as a cofactor.

It is found in the cytoplasm. Exhibits a very high intrinsic GTPase hydrolysis rate. Involved in the addition of a carboxymethylaminomethyl (cmnm) group at the wobble position (U34) of certain tRNAs, forming tRNA-cmnm(5)s(2)U34. In Ureaplasma parvum serovar 3 (strain ATCC 27815 / 27 / NCTC 11736), this protein is tRNA modification GTPase MnmE.